The primary structure comprises 78 residues: Short neurotoxin SNTX11 (78 aa).

Positions 1 to 21 are cleaved as a signal peptide; sequence MKTLLLTFLVVTIVCLDLGYT. 4 disulfides stabilise this stretch: C24-C40, C33-C58, C62-C70, and C71-C76.

This sequence belongs to the three-finger toxin family. Short-chain subfamily. As to expression, expressed by the venom gland.

It localises to the secreted. This three-finger toxin binds and inhibits the nicotinic acetylcholine receptor (nAChR). This chain is Short neurotoxin SNTX11, found in Ophiophagus hannah (King cobra).